The primary structure comprises 638 residues: Chaperone protein DnaK 2 (638 aa).

Thr199 bears the Phosphothreonine; by autocatalysis mark. Residues 604 to 626 (AKEQAQSAPEGAQEADAAPADDV) are disordered. Low complexity predominate over residues 613-624 (EGAQEADAAPAD).

This sequence belongs to the heat shock protein 70 family.

In terms of biological role, acts as a chaperone. This Colwellia psychrerythraea (strain 34H / ATCC BAA-681) (Vibrio psychroerythus) protein is Chaperone protein DnaK 2.